Consider the following 1300-residue polypeptide: Insulin receptor-related protein (1300 aa).

The first 26 residues, 1-26 (MARPKLWPWGILLLVSLLSAGFNLDT), serve as a signal peptide directing secretion. An N-linked (GlcNAc...) asparagine glycan is attached at Asn47. 9 disulfide bridges follow: Cys214-Cys222, Cys216-Cys228, Cys229-Cys237, Cys233-Cys246, Cys249-Cys258, Cys262-Cys274, Cys280-Cys300, Cys304-Cys317, and Cys320-Cys324. Asn311 carries an N-linked (GlcNAc...) asparagine glycan. N-linked (GlcNAc...) asparagine glycans are attached at residues Asn411, Asn492, Asn528, Asn616, Asn634, Asn756, Asn885, and Asn898. Fibronectin type-III domains lie at 483–603 (QTRT…TLPA) and 607–707 (VPQD…AQEA). The cysteines at positions 657 and 864 are disulfide-linked. Positions 740-762 (DAGRHRRAIGSPRPGGNSSDFEI) are disordered. The Extracellular segment spans residues 747-921 (AIGSPRPGGN…PEEEDSGGLH (175 aa)). Positions 818-912 (IPGKLSWEAA…DSVAFYIPGP (95 aa)) constitute a Fibronectin type-III 3 domain. The helical transmembrane segment at 922–943 (ILLTVTPAGLMLLIILAALGFF) threads the bilayer. Topologically, residues 944 to 1300 (YSRKRNGTLY…CSLQNGGPEH (357 aa)) are cytoplasmic. The region spanning 979 to 1254 (ISIIRELGQG…SIQKELRPSF (276 aa)) is the Protein kinase domain. ATP contacts are provided by residues 985–993 (LGQGSFGMV) and Lys1013. The Proton acceptor role is filled by Asp1115. Phosphotyrosine; by autocatalysis occurs at positions 1145 and 1146. The interval 1270–1300 (GLQPTTDAESSSPPTSKGASDCSLQNGGPEH) is disordered. Residues 1272–1300 (QPTTDAESSSPPTSKGASDCSLQNGGPEH) are compositionally biased toward polar residues.

Belongs to the protein kinase superfamily. Tyr protein kinase family. Insulin receptor subfamily. Probable tetramer of 2 alpha and 2 beta chains linked by disulfide bonds. The alpha chains contribute to the formation of the ligand-binding domain, while the beta chains carry the kinase domain. In terms of processing, autophosphorylated on tyrosine residues between pH 7.9 and pH 10.5.

It localises to the membrane. The catalysed reaction is L-tyrosyl-[protein] + ATP = O-phospho-L-tyrosyl-[protein] + ADP + H(+). Receptor with tyrosine-protein kinase activity. Functions as a pH sensing receptor which is activated by increased extracellular pH. Activates an intracellular signaling pathway that involves IRS1 and AKT1/PKB. This is Insulin receptor-related protein (INSRR) from Cavia porcellus (Guinea pig).